The primary structure comprises 534 residues: Solute carrier family 22 member 15 (534 aa).

Residues 22 to 42 (FLLAVLLQLYSATEAIIITIL) traverse the membrane as a helical segment. 3 N-linked (GlcNAc...) asparagine glycosylation sites follow: Asn-52, Asn-58, and Asn-83. Helical transmembrane passes span 97-117 (AAYEVSVSSSVYFGGVLIGVI), 136-156 (LALEVVFAVMNALTPIFPLFL), 161-181 (LVGVMNGGMSLVAFVLLNECI), 191-211 (SLGSLCFAVGIAQFALIGYFI), 216-236 (LLALLVNVQGAAVLALSLCIP), 297-317 (TLIMMWVWFVCSLVYYGLTLS), 327-347 (LNLALSGLAELPAYPLCMYLI), 356-376 (GSLAGFLCVGGGACLLIMLVP), 391-411 (TLSLLGKLNISAAFNIVYIYS), 424-444 (MGVCSMFSRIGGIIAPFIPAL), and 450-470 (ALPFIVFGAAGVSAGLLSLLL). An N-linked (GlcNAc...) asparagine glycan is attached at Asn-513.

This sequence belongs to the major facilitator (TC 2.A.1) superfamily. Organic cation transporter (TC 2.A.1.19) family.

It localises to the membrane. Probably transports organic cations. This chain is Solute carrier family 22 member 15 (slc22a15), found in Xenopus tropicalis (Western clawed frog).